The following is a 161-amino-acid chain: MPLYETVFIARNDVSQQQVEAVADGIAALLETDGGAVKKREYWGLRSLAYRIKKNRKGHYMLLGLDAKPETIKEIERQLGLNEDVMRVLTLRVDEIDEAPSVILSRKGDERERGFRGPKPAGRFESGRGGAGGARRGYDDREEFRARNEREDGRDTDGEAE.

The segment at 107–161 (KGDERERGFRGPKPAGRFESGRGGAGGARRGYDDREEFRARNEREDGRDTDGEAE) is disordered. A compositionally biased stretch (basic and acidic residues) spans 136-161 (RGYDDREEFRARNEREDGRDTDGEAE).

This sequence belongs to the bacterial ribosomal protein bS6 family.

In terms of biological role, binds together with bS18 to 16S ribosomal RNA. This Gluconacetobacter diazotrophicus (strain ATCC 49037 / DSM 5601 / CCUG 37298 / CIP 103539 / LMG 7603 / PAl5) protein is Small ribosomal subunit protein bS6.